The following is a 240-amino-acid chain: Mannosyl-D-glycerate transport/metabolism system repressor MngR (240 aa).

The region spanning 4–72 (KPLYRQIADR…QGSGTYVKEE (69 aa)) is the HTH gntR-type domain. Residues 32 to 51 (ESALQTEFGVSRVTVRQALR) constitute a DNA-binding region (H-T-H motif).

In terms of biological role, represses mngA and mngB. Regulates its own expression. The sequence is that of Mannosyl-D-glycerate transport/metabolism system repressor MngR (mngR) from Escherichia coli (strain K12).